Consider the following 435-residue polypeptide: Serine--tRNA ligase (435 aa).

An L-serine-binding site is contributed by 234-236 (TAE). 265 to 267 (RRE) contacts ATP. Glu-288 contacts L-serine. 352 to 355 (EISS) contributes to the ATP binding site. Residue Ser-388 coordinates L-serine.

This sequence belongs to the class-II aminoacyl-tRNA synthetase family. Type-1 seryl-tRNA synthetase subfamily. In terms of assembly, homodimer. The tRNA molecule binds across the dimer.

It is found in the cytoplasm. It carries out the reaction tRNA(Ser) + L-serine + ATP = L-seryl-tRNA(Ser) + AMP + diphosphate + H(+). It catalyses the reaction tRNA(Sec) + L-serine + ATP = L-seryl-tRNA(Sec) + AMP + diphosphate + H(+). It functions in the pathway aminoacyl-tRNA biosynthesis; selenocysteinyl-tRNA(Sec) biosynthesis; L-seryl-tRNA(Sec) from L-serine and tRNA(Sec): step 1/1. In terms of biological role, catalyzes the attachment of serine to tRNA(Ser). Is also able to aminoacylate tRNA(Sec) with serine, to form the misacylated tRNA L-seryl-tRNA(Sec), which will be further converted into selenocysteinyl-tRNA(Sec). The chain is Serine--tRNA ligase from Synechococcus sp. (strain JA-3-3Ab) (Cyanobacteria bacterium Yellowstone A-Prime).